Reading from the N-terminus, the 287-residue chain is Pantothenate synthetase (287 aa).

30–37 contributes to the ATP binding site; the sequence is MGNLHSGH. Residue histidine 37 is the Proton donor of the active site. Position 61 (glutamine 61) interacts with (R)-pantoate. Glutamine 61 is a binding site for beta-alanine. 149-152 lines the ATP pocket; that stretch reads GEKD. Position 155 (glutamine 155) interacts with (R)-pantoate. ATP contacts are provided by residues valine 178 and 186–189; that span reads LSSR.

This sequence belongs to the pantothenate synthetase family. In terms of assembly, homodimer.

It is found in the cytoplasm. It carries out the reaction (R)-pantoate + beta-alanine + ATP = (R)-pantothenate + AMP + diphosphate + H(+). It participates in cofactor biosynthesis; (R)-pantothenate biosynthesis; (R)-pantothenate from (R)-pantoate and beta-alanine: step 1/1. Catalyzes the condensation of pantoate with beta-alanine in an ATP-dependent reaction via a pantoyl-adenylate intermediate. The protein is Pantothenate synthetase of Pseudomonas putida (strain ATCC 47054 / DSM 6125 / CFBP 8728 / NCIMB 11950 / KT2440).